Consider the following 636-residue polypeptide: Threonine--tRNA ligase (636 aa).

Residues 1–61 (MPVITLPDGS…TQDVSLSIIT (61 aa)) enclose the TGS domain. Residues 242–533 (DHRKLGKKFD…LIEEYEGAFP (292 aa)) form a catalytic region. Zn(2+)-binding residues include Cys333, His384, and His510.

Belongs to the class-II aminoacyl-tRNA synthetase family. Homodimer. It depends on Zn(2+) as a cofactor.

It is found in the cytoplasm. The enzyme catalyses tRNA(Thr) + L-threonine + ATP = L-threonyl-tRNA(Thr) + AMP + diphosphate + H(+). In terms of biological role, catalyzes the attachment of threonine to tRNA(Thr) in a two-step reaction: L-threonine is first activated by ATP to form Thr-AMP and then transferred to the acceptor end of tRNA(Thr). Also edits incorrectly charged L-seryl-tRNA(Thr). In Saccharophagus degradans (strain 2-40 / ATCC 43961 / DSM 17024), this protein is Threonine--tRNA ligase.